The sequence spans 187 residues: Elongation factor P (187 aa).

The protein belongs to the elongation factor P family.

Its subcellular location is the cytoplasm. It functions in the pathway protein biosynthesis; polypeptide chain elongation. Involved in peptide bond synthesis. Stimulates efficient translation and peptide-bond synthesis on native or reconstituted 70S ribosomes in vitro. Probably functions indirectly by altering the affinity of the ribosome for aminoacyl-tRNA, thus increasing their reactivity as acceptors for peptidyl transferase. The protein is Elongation factor P of Chromobacterium violaceum (strain ATCC 12472 / DSM 30191 / JCM 1249 / CCUG 213 / NBRC 12614 / NCIMB 9131 / NCTC 9757 / MK).